Reading from the N-terminus, the 132-residue chain is Small ribosomal subunit protein uS8 (132 aa).

The protein belongs to the universal ribosomal protein uS8 family. In terms of assembly, part of the 30S ribosomal subunit. Contacts proteins S5 and S12.

In terms of biological role, one of the primary rRNA binding proteins, it binds directly to 16S rRNA central domain where it helps coordinate assembly of the platform of the 30S subunit. The polypeptide is Small ribosomal subunit protein uS8 (Bacillus velezensis (strain DSM 23117 / BGSC 10A6 / LMG 26770 / FZB42) (Bacillus amyloliquefaciens subsp. plantarum)).